The primary structure comprises 408 residues: Tyrosine--tRNA ligase (408 aa).

Tyrosine 35 provides a ligand contact to L-tyrosine. The 'HIGH' region motif lies at proline 40–histidine 49. L-tyrosine is bound by residues tyrosine 168 and glutamine 172. The 'KMSKS' region signature appears at lysine 228–threonine 232. An ATP-binding site is contributed by lysine 231. Positions isoleucine 342–leucine 407 constitute an S4 RNA-binding domain.

The protein belongs to the class-I aminoacyl-tRNA synthetase family. TyrS type 1 subfamily. Homodimer.

Its subcellular location is the cytoplasm. It catalyses the reaction tRNA(Tyr) + L-tyrosine + ATP = L-tyrosyl-tRNA(Tyr) + AMP + diphosphate + H(+). Its function is as follows. Catalyzes the attachment of tyrosine to tRNA(Tyr) in a two-step reaction: tyrosine is first activated by ATP to form Tyr-AMP and then transferred to the acceptor end of tRNA(Tyr). The protein is Tyrosine--tRNA ligase of Acetivibrio thermocellus (strain ATCC 27405 / DSM 1237 / JCM 9322 / NBRC 103400 / NCIMB 10682 / NRRL B-4536 / VPI 7372) (Clostridium thermocellum).